The sequence spans 330 residues: ADP-L-glycero-D-manno-heptose-6-epimerase (330 aa).

Residues Phe-11 to Ile-12, Asp-32 to Asn-33, Lys-39, Lys-54, Glu-75 to Ser-79, and Asn-92 each bind NADP(+). Tyr-139 serves as the catalytic Proton acceptor. Lys-143 provides a ligand contact to NADP(+). Asn-168 contributes to the substrate binding site. 2 residues coordinate NADP(+): Val-169 and Lys-177. Lys-177 (proton acceptor) is an active-site residue. Residues Arg-179, His-186, Phe-200–Tyr-203, Arg-213, and Tyr-292 each bind substrate.

It belongs to the NAD(P)-dependent epimerase/dehydratase family. HldD subfamily. Homopentamer. Requires NADP(+) as cofactor.

The catalysed reaction is ADP-D-glycero-beta-D-manno-heptose = ADP-L-glycero-beta-D-manno-heptose. Its pathway is nucleotide-sugar biosynthesis; ADP-L-glycero-beta-D-manno-heptose biosynthesis; ADP-L-glycero-beta-D-manno-heptose from D-glycero-beta-D-manno-heptose 7-phosphate: step 4/4. Catalyzes the interconversion between ADP-D-glycero-beta-D-manno-heptose and ADP-L-glycero-beta-D-manno-heptose via an epimerization at carbon 6 of the heptose. This is ADP-L-glycero-D-manno-heptose-6-epimerase from Burkholderia vietnamiensis (strain G4 / LMG 22486) (Burkholderia cepacia (strain R1808)).